The chain runs to 1159 residues: ATP-dependent helicase/deoxyribonuclease subunit B (1159 aa).

Residue 8-15 (GRAGSGKT) participates in ATP binding. [4Fe-4S] cluster is bound by residues cysteine 784, cysteine 1102, cysteine 1105, and cysteine 1111. The segment at 1140 to 1159 (VKEDGSQVDGRTEGSDNNEG) is disordered.

It belongs to the helicase family. AddB/RexB type 1 subfamily. In terms of assembly, heterodimer of AddA and AddB. Requires Mg(2+) as cofactor. [4Fe-4S] cluster is required as a cofactor.

Its function is as follows. The heterodimer acts as both an ATP-dependent DNA helicase and an ATP-dependent, dual-direction single-stranded exonuclease. Recognizes the chi site generating a DNA molecule suitable for the initiation of homologous recombination. The AddB subunit has 5' -&gt; 3' nuclease activity but not helicase activity. This is ATP-dependent helicase/deoxyribonuclease subunit B from Caldanaerobacter subterraneus subsp. tengcongensis (strain DSM 15242 / JCM 11007 / NBRC 100824 / MB4) (Thermoanaerobacter tengcongensis).